A 255-amino-acid polypeptide reads, in one-letter code: 3-deoxy-manno-octulosonate cytidylyltransferase (255 aa).

The protein belongs to the KdsB family.

It localises to the cytoplasm. The catalysed reaction is 3-deoxy-alpha-D-manno-oct-2-ulosonate + CTP = CMP-3-deoxy-beta-D-manno-octulosonate + diphosphate. It functions in the pathway nucleotide-sugar biosynthesis; CMP-3-deoxy-D-manno-octulosonate biosynthesis; CMP-3-deoxy-D-manno-octulosonate from 3-deoxy-D-manno-octulosonate and CTP: step 1/1. Its pathway is bacterial outer membrane biogenesis; lipopolysaccharide biosynthesis. Functionally, activates KDO (a required 8-carbon sugar) for incorporation into bacterial lipopolysaccharide in Gram-negative bacteria. The protein is 3-deoxy-manno-octulosonate cytidylyltransferase of Pelobacter propionicus (strain DSM 2379 / NBRC 103807 / OttBd1).